The chain runs to 186 residues: Glutathione peroxidase 7 (186 aa).

An N-terminal signal peptide occupies residues 1-18 (MVAAVATAWLLLWAAACA). Cys56 is an active-site residue.

The protein belongs to the glutathione peroxidase family.

The protein localises to the secreted. The enzyme catalyses 2 glutathione + H2O2 = glutathione disulfide + 2 H2O. Functionally, it protects esophageal epithelia from hydrogen peroxide-induced oxidative stress. It suppresses acidic bile acid-induced reactive oxygen species (ROS) and protects against oxidative DNA damage and double-strand breaks. This Mus musculus (Mouse) protein is Glutathione peroxidase 7 (Gpx7).